Consider the following 555-residue polypeptide: Formate--tetrahydrofolate ligase (555 aa).

65–72 (TPAGEGKS) provides a ligand contact to ATP.

The protein belongs to the formate--tetrahydrofolate ligase family.

The enzyme catalyses (6S)-5,6,7,8-tetrahydrofolate + formate + ATP = (6R)-10-formyltetrahydrofolate + ADP + phosphate. It functions in the pathway one-carbon metabolism; tetrahydrofolate interconversion. This chain is Formate--tetrahydrofolate ligase, found in Staphylococcus aureus (strain USA300).